Here is a 428-residue protein sequence, read N- to C-terminus: Hemagglutinin-esterase (428 aa).

The N-terminal stretch at M1–V19 is a signal peptide. Residues T9–A129 form an esterase domain 1 region. Residues F20–V404 lie on the Virion surface side of the membrane. S42 serves as the catalytic Nucleophile. A disulfide bridge connects residues C46 and C67. N-linked (GlcNAc...) asparagine; by host glycans are attached at residues N91, N149, N193, N243, and N313. A disulfide bond links C115 and C164. The segment at R130–Y278 is receptor binding. 2 disulfides stabilise this stretch: C199-C288 and C207-C261. An esterase domain 2 region spans residues L279–Y392. Residues C319 and C324 are joined by a disulfide bond. N-linked (GlcNAc...) asparagine; by host glycans are attached at residues N328 and N332. Catalysis depends on charge relay system residues D339 and H342. N-linked (GlcNAc...) asparagine; by host glycans are attached at residues N357 and N371. A disulfide bridge connects residues C360 and C384. A helical membrane pass occupies residues I405–F425. At Y426–G428 the chain is on the intravirion side.

This sequence belongs to the influenza type C/coronaviruses hemagglutinin-esterase family. In terms of assembly, homodimer; disulfide-linked. Forms a complex with the M protein in the pre-Golgi. Associates then with S-M complex to form a ternary complex S-M-HE. In terms of processing, N-glycosylated in the RER. N-glycosylated in the host RER.

It is found in the virion membrane. The protein localises to the host cell membrane. The enzyme catalyses N-acetyl-9-O-acetylneuraminate + H2O = N-acetylneuraminate + acetate + H(+). It catalyses the reaction N-acetyl-4-O-acetylneuraminate + H2O = N-acetylneuraminate + acetate + H(+). Structural protein that makes short spikes at the surface of the virus. Contains receptor binding and receptor-destroying activities. Mediates de-O-acetylation of N-acetyl-4-O-acetylneuraminic acid, which is probably the receptor determinant recognized by the virus on the surface of erythrocytes and susceptible cells. This receptor-destroying activity is important for virus release as it probably helps preventing self-aggregation and ensures the efficient spread of the progeny virus from cell to cell. May serve as a secondary viral attachment protein for initiating infection, the spike protein being the major one. May become a target for both the humoral and the cellular branches of the immune system. The sequence is that of Hemagglutinin-esterase from Mus musculus (Mouse).